We begin with the raw amino-acid sequence, 747 residues long: Major facilitator superfamily domain-containing protein 6-B (747 aa).

A run of 11 helical transmembrane segments spans residues 15–35 (LLFF…CVLQ), 75–95 (KAVL…IGFV), 222–242 (TIFL…APAV), 271–291 (WGIA…TIFI), 306–326 (IAFI…TQFH), 391–411 (VLFV…FLFW), 420–440 (TTLF…AYFI), 453–470 (VLYI…YISY), 485–507 (GLTH…PPAL), 520–540 (LGLG…FFGA), and 546–566 (GLGM…WLLG). Polar residues-rich tracts occupy residues 597–606 (NQSTSQPNSD) and 652–668 (NNDC…QTSA). 2 disordered regions span residues 597–625 (NQST…NKPA) and 652–747 (NNDC…PTTH). Residues 675–685 (STSSQPNASSS) are compositionally biased toward low complexity.

Belongs to the major facilitator superfamily. MFSD6 family.

The protein resides in the membrane. The chain is Major facilitator superfamily domain-containing protein 6-B (mfsd6b) from Danio rerio (Zebrafish).